We begin with the raw amino-acid sequence, 283 residues long: Apidaecins type 73 (283 aa).

Residues 1–18 (KNFALAILVVTFVVAVFG) form the signal peptide. 9 propeptides span residues 19–41 (NTNL…EAEP), 62–69 (EAEPEAEP), 90–97 (EAELEAEP), 118–125 (EAEPEAEP), 146–153 (EAELEAEP), 174–181 (EAEPEAEP), 202–209 (EAEPEAEP), 230–237 (EAEPEAEP), and 258–265 (EAKPEAKP). The segment at 19-283 (NTNLDPPTRP…PQPRPPHPRI (265 aa)) is disordered. Residues 273–283 (IPQPRPPHPRI) are compositionally biased toward pro residues.

This sequence belongs to the apidaecin family.

It localises to the secreted. Its function is as follows. Apidaecins have bactericidal activity; predominantly against Gram-negative bacteria. They seem to interfere with cell propagation. This is Apidaecins type 73 (APID73) from Apis mellifera (Honeybee).